The primary structure comprises 256 residues: Imidazole glycerol phosphate synthase subunit HisF (256 aa).

Residues Asp12 and Asp131 contribute to the active site.

Belongs to the HisA/HisF family. Heterodimer of HisH and HisF.

The protein localises to the cytoplasm. The enzyme catalyses 5-[(5-phospho-1-deoxy-D-ribulos-1-ylimino)methylamino]-1-(5-phospho-beta-D-ribosyl)imidazole-4-carboxamide + L-glutamine = D-erythro-1-(imidazol-4-yl)glycerol 3-phosphate + 5-amino-1-(5-phospho-beta-D-ribosyl)imidazole-4-carboxamide + L-glutamate + H(+). It participates in amino-acid biosynthesis; L-histidine biosynthesis; L-histidine from 5-phospho-alpha-D-ribose 1-diphosphate: step 5/9. IGPS catalyzes the conversion of PRFAR and glutamine to IGP, AICAR and glutamate. The HisF subunit catalyzes the cyclization activity that produces IGP and AICAR from PRFAR using the ammonia provided by the HisH subunit. The polypeptide is Imidazole glycerol phosphate synthase subunit HisF (Pseudomonas fluorescens (strain ATCC BAA-477 / NRRL B-23932 / Pf-5)).